A 228-amino-acid polypeptide reads, in one-letter code: Prolactin (228 aa).

A signal peptide spans 1–29; sequence MCPKGSSVKGSLLLLLLMSSRFLFKAVES. Cysteine 33 and cysteine 40 are disulfide-bonded. Residues serine 55, serine 63, and serine 119 each carry the phosphoserine modification. 2 cysteine pairs are disulfide-bonded: cysteine 87–cysteine 203 and cysteine 220–cysteine 228.

It belongs to the somatotropin/prolactin family. In terms of assembly, interacts with PRLR.

The protein localises to the secreted. Its function is as follows. Prolactin acts primarily on the mammary gland by promoting lactation. This chain is Prolactin (PRL), found in Monodelphis domestica (Gray short-tailed opossum).